A 1175-amino-acid chain; its full sequence is DNA ligase 3 (1175 aa).

A disordered region spans residues 195–243 (HDFDNDNGDGDDGDGDDNDDDDGDGDSDSDKKKKKSSGGSGSDSGSKKK). Over residues 199–221 (NDNGDGDDGDGDDNDDDDGDGDS) the composition is skewed to acidic residues. E281 contributes to the ATP binding site. Catalysis depends on K283, which acts as the N6-AMP-lysine intermediate. Positions 288 and 303 each coordinate ATP. Residues E334 and E432 each coordinate Mg(2+). 3 residues coordinate ATP: K437, R448, and K452. Disordered stretches follow at residues 612–669 (PVGK…LKFV) and 829–869 (KSSP…KRGR). 2 stretches are compositionally biased toward low complexity: residues 622–635 (TTTT…TTTT) and 829–859 (KSSP…SSPS). Residues 883 to 976 (PSLPIFEDVN…KLLPLHEDYI (94 aa)) form the BRCT 1 domain. Positions 984 to 1036 (PDYSQSSSSSSMSIEEEKIVVTTTSDDPSEGNQQQQDKKVIKESKIIQSKDHS) are disordered. The segment covering 987 to 996 (SQSSSSSSMS) has biased composition (low complexity). Positions 1004–1018 (VTTTSDDPSEGNQQQ) are enriched in polar residues. Residues 1019-1036 (QDKKVIKESKIIQSKDHS) are compositionally biased toward basic and acidic residues. The BRCT 2 domain occupies 1067 to 1174 (HLLSIFQECI…DLLDVKNYKL (108 aa)).

Belongs to the ATP-dependent DNA ligase family. Mg(2+) is required as a cofactor.

It localises to the nucleus. It catalyses the reaction ATP + (deoxyribonucleotide)n-3'-hydroxyl + 5'-phospho-(deoxyribonucleotide)m = (deoxyribonucleotide)n+m + AMP + diphosphate.. In terms of biological role, the alpha isoform interacts with DNA-repair protein XRCC1 and can correct defective DNA strand-break repair and sister chromatid exchange following treatment with ionizing radiation and alkylating agents. The beta isoform does not interact with XRCC1 and may be specifically involved in the completion of homologous recombination events that occur during meiotic prophase. The polypeptide is DNA ligase 3 (lig3) (Dictyostelium discoideum (Social amoeba)).